Consider the following 122-residue polypeptide: Large ribosomal subunit protein bL12 (122 aa).

It belongs to the bacterial ribosomal protein bL12 family. Homodimer. Part of the ribosomal stalk of the 50S ribosomal subunit. Forms a multimeric L10(L12)X complex, where L10 forms an elongated spine to which 2 to 4 L12 dimers bind in a sequential fashion. Binds GTP-bound translation factors.

Its function is as follows. Forms part of the ribosomal stalk which helps the ribosome interact with GTP-bound translation factors. Is thus essential for accurate translation. This is Large ribosomal subunit protein bL12 from Myxococcus xanthus (strain DK1622).